Reading from the N-terminus, the 678-residue chain is THO complex subunit 5 homolog B (678 aa).

2 disordered regions span residues 1-37 (MSSD…EEAE) and 294-329 (ALFK…VQLD). A Nuclear localization signal motif is present at residues 7 to 10 (KKRK). Positions 14 to 37 (NRSEDGKRGRHDEQEGRYYSEEAE) are enriched in basic and acidic residues. The segment covering 301–314 (DSQDDESDSDAEEE) has biased composition (acidic residues).

It belongs to the THOC5 family. As to quaternary structure, component of the THO subcomplex, which is composed of thoc1, thoc2, thoc3, thoc5, thoc6 and thoc7. Component of the transcription/export (TREX) complex at least composed of alyref/thoc4, ddx39b, sarnp/cip29, chtop and the THO subcomplex. Interacts with thoc7.

Its subcellular location is the nucleus. It localises to the nucleus speckle. The protein localises to the cytoplasm. Functionally, component of the THO subcomplex of the TREX complex which is thought to couple mRNA transcription, processing and nuclear export, and which specifically associates with spliced mRNA and not with unspliced pre-mRNA. Plays a key structural role in the oligomerization of the THO-ddx39b complex. TREX is recruited to spliced mRNAs by a transcription-independent mechanism, binds to mRNA upstream of the exon-junction complex (EJC) and is recruited in a splicing- and cap-dependent manner to a region near the 5' end of the mRNA where it functions in mRNA export to the cytoplasm via the TAP/NXF1 pathway. May be involved in cell differentiation. The sequence is that of THO complex subunit 5 homolog B (thoc5-b) from Xenopus laevis (African clawed frog).